The following is a 322-amino-acid chain: MSAKPDLKIVLCSPRGFCAGVVRAIDTVERALDKYGAPVYVRHEIVHNKYVVDGLKKKGAIFVEELAEIPESTTAPVVFSAHGVPKSVPADAQSRNLFSLDATCPLVTKVHREAAIHFKRGREIFLIGHSHHPEVVGTLGQLPVGAVTLIETAEDAKTITPKDPNNLAFVTQTTLSIDDTAEIVALLKERFPNINGPHKEDICYATTNRQLAVKKVAPVVDALIVVGAPNSSNSQRLREVAEREGCPIAVLAQRAADLDWKRFENITSLGITAGASAPEVIVEEIMDAFAERFTLHVETVSAAEENEFFPLPRQVRPEAAAE.

Cys-18 contacts [4Fe-4S] cluster. (2E)-4-hydroxy-3-methylbut-2-enyl diphosphate is bound by residues His-47 and His-82. Residues His-47 and His-82 each contribute to the dimethylallyl diphosphate site. 2 residues coordinate isopentenyl diphosphate: His-47 and His-82. Cys-104 contacts [4Fe-4S] cluster. A (2E)-4-hydroxy-3-methylbut-2-enyl diphosphate-binding site is contributed by His-132. His-132 lines the dimethylallyl diphosphate pocket. His-132 is a binding site for isopentenyl diphosphate. Glu-134 (proton donor) is an active-site residue. Position 173 (Thr-173) interacts with (2E)-4-hydroxy-3-methylbut-2-enyl diphosphate. [4Fe-4S] cluster is bound at residue Cys-203. The (2E)-4-hydroxy-3-methylbut-2-enyl diphosphate site is built by Ser-231, Ser-232, Asn-233, and Ser-276. Dimethylallyl diphosphate contacts are provided by Ser-231, Ser-232, Asn-233, and Ser-276. Residues Ser-231, Ser-232, Asn-233, and Ser-276 each contribute to the isopentenyl diphosphate site.

It belongs to the IspH family. Requires [4Fe-4S] cluster as cofactor.

The enzyme catalyses isopentenyl diphosphate + 2 oxidized [2Fe-2S]-[ferredoxin] + H2O = (2E)-4-hydroxy-3-methylbut-2-enyl diphosphate + 2 reduced [2Fe-2S]-[ferredoxin] + 2 H(+). It catalyses the reaction dimethylallyl diphosphate + 2 oxidized [2Fe-2S]-[ferredoxin] + H2O = (2E)-4-hydroxy-3-methylbut-2-enyl diphosphate + 2 reduced [2Fe-2S]-[ferredoxin] + 2 H(+). Its pathway is isoprenoid biosynthesis; dimethylallyl diphosphate biosynthesis; dimethylallyl diphosphate from (2E)-4-hydroxy-3-methylbutenyl diphosphate: step 1/1. It participates in isoprenoid biosynthesis; isopentenyl diphosphate biosynthesis via DXP pathway; isopentenyl diphosphate from 1-deoxy-D-xylulose 5-phosphate: step 6/6. In terms of biological role, catalyzes the conversion of 1-hydroxy-2-methyl-2-(E)-butenyl 4-diphosphate (HMBPP) into a mixture of isopentenyl diphosphate (IPP) and dimethylallyl diphosphate (DMAPP). Acts in the terminal step of the DOXP/MEP pathway for isoprenoid precursor biosynthesis. This Bradyrhizobium diazoefficiens (strain JCM 10833 / BCRC 13528 / IAM 13628 / NBRC 14792 / USDA 110) protein is 4-hydroxy-3-methylbut-2-enyl diphosphate reductase 1.